Reading from the N-terminus, the 226-residue chain is dITP/XTP pyrophosphatase (226 aa).

14–19 is a substrate binding site; that stretch reads TGNKDK. 2 residues coordinate Mg(2+): Glu49 and Asp83. The active-site Proton acceptor is the Asp83. Substrate contacts are provided by residues Thr84, 176-179, Lys199, and 204-205; these read FGYD and HR.

This sequence belongs to the HAM1 NTPase family. As to quaternary structure, homodimer. Mg(2+) serves as cofactor.

The catalysed reaction is XTP + H2O = XMP + diphosphate + H(+). It carries out the reaction dITP + H2O = dIMP + diphosphate + H(+). The enzyme catalyses ITP + H2O = IMP + diphosphate + H(+). Its function is as follows. Pyrophosphatase that catalyzes the hydrolysis of nucleoside triphosphates to their monophosphate derivatives, with a high preference for the non-canonical purine nucleotides XTP (xanthosine triphosphate), dITP (deoxyinosine triphosphate) and ITP. Seems to function as a house-cleaning enzyme that removes non-canonical purine nucleotides from the nucleotide pool, thus preventing their incorporation into DNA/RNA and avoiding chromosomal lesions. This chain is dITP/XTP pyrophosphatase, found in Chlorobaculum tepidum (strain ATCC 49652 / DSM 12025 / NBRC 103806 / TLS) (Chlorobium tepidum).